We begin with the raw amino-acid sequence, 820 residues long: Ribosome biogenesis protein ERB1 (820 aa).

The tract at residues 1 to 111 (MVRSRSNSVK…SDAGDDEVDP (111 aa)) is disordered. Residues 9 to 19 (VKKDLKRKVDE) show a composition bias toward basic and acidic residues. Acidic residues predominate over residues 20 to 48 (PVDVQDEFDVEGLIDEGDSDDEDEAEQEV). The segment covering 53–64 (VTKDKKNTSKTE) has biased composition (basic and acidic residues). Residues 65–110 (NEEDADDESDSDAELEALIGEEEDLSGSELEDELAYFSDAGDDEVD) are compositionally biased toward acidic residues. A required for interaction with NOP7 region spans residues 282 to 395 (RFIPSKHEAK…LRHVPGYSES (114 aa)). The interval 395 to 431 (SVRERFERSLDLYLAPRVRKNKLNIDPDSLIPDLPSP) is required for interaction with YTM1. 2 WD repeats span residues 447 to 486 (GHKG…ELYR) and 495 to 535 (AQDD…FDIE). Residues 545–585 (GWGFAEGGREQQDIDTKGLDDDADSDSDDETGHVKKKSPPA) form a disordered region. Over residues 551 to 564 (GGREQQDIDTKGLD) the composition is skewed to basic and acidic residues. WD repeat units follow at residues 604-646 (TATK…SQSP), 649-687 (KSKG…MAKK), 690-729 (PGAR…KPYK), 733-773 (YHEK…DMMT), and 789-820 (KSGL…LWTT).

The protein belongs to the WD repeat BOP1/ERB1 family. As to quaternary structure, component of the NOP7 complex, composed of ERB1, NOP7 and YTM1. The complex is held together by ERB1, which interacts with NOP7 via its N-terminal domain and with YTM1 via a high-affinity interaction between the seven-bladed beta-propeller domains of the 2 proteins. The NOP7 complex associates with the 66S pre-ribosome.

It localises to the nucleus. It is found in the nucleolus. The protein resides in the nucleoplasm. Component of the NOP7 complex, which is required for maturation of the 25S and 5.8S ribosomal RNAs and formation of the 60S ribosome. The sequence is that of Ribosome biogenesis protein ERB1 from Yarrowia lipolytica (strain CLIB 122 / E 150) (Yeast).